A 155-amino-acid polypeptide reads, in one-letter code: SsrA-binding protein (155 aa).

Residues 127–149 are compositionally biased toward basic and acidic residues; it reads KKDYDKRNDMRKKEAKREMERTF. Residues 127–155 are disordered; sequence KKDYDKRNDMRKKEAKREMERTFKSKNQY.

This sequence belongs to the SmpB family.

The protein localises to the cytoplasm. Functionally, required for rescue of stalled ribosomes mediated by trans-translation. Binds to transfer-messenger RNA (tmRNA), required for stable association of tmRNA with ribosomes. tmRNA and SmpB together mimic tRNA shape, replacing the anticodon stem-loop with SmpB. tmRNA is encoded by the ssrA gene; the 2 termini fold to resemble tRNA(Ala) and it encodes a 'tag peptide', a short internal open reading frame. During trans-translation Ala-aminoacylated tmRNA acts like a tRNA, entering the A-site of stalled ribosomes, displacing the stalled mRNA. The ribosome then switches to translate the ORF on the tmRNA; the nascent peptide is terminated with the 'tag peptide' encoded by the tmRNA and targeted for degradation. The ribosome is freed to recommence translation, which seems to be the essential function of trans-translation. The polypeptide is SsrA-binding protein (Lysinibacillus sphaericus (strain C3-41)).